Reading from the N-terminus, the 225-residue chain is Glycerol-3-phosphate acyltransferase (225 aa).

Transmembrane regions (helical) follow at residues 6 to 26 (FFFF…LIIG), 55 to 75 (WGIV…IICL), 95 to 115 (DIAI…SIFN), 135 to 155 (PFIG…VGYA), 160 to 180 (IMAT…PGIT), and 187 to 207 (ILYF…HSNI).

Belongs to the PlsY family. As to quaternary structure, probably interacts with PlsX.

It localises to the cell membrane. It carries out the reaction an acyl phosphate + sn-glycerol 3-phosphate = a 1-acyl-sn-glycero-3-phosphate + phosphate. It functions in the pathway lipid metabolism; phospholipid metabolism. Catalyzes the transfer of an acyl group from acyl-phosphate (acyl-PO(4)) to glycerol-3-phosphate (G3P) to form lysophosphatidic acid (LPA). This enzyme utilizes acyl-phosphate as fatty acyl donor, but not acyl-CoA or acyl-ACP. In Phytoplasma australiense, this protein is Glycerol-3-phosphate acyltransferase.